The following is a 307-amino-acid chain: MVSSTTSEVQPTMGVKIFSAGVSACLADIITFPLDTAKVRLQIQGEGQASSTIRYKGVLGTITTLAKTEGLPKLYSGLPAGIQRQISFASLRIGLYDTVQEYFSSGRETPASLGSKISAGLMTGGVAVFIGQPTEVVKVRMQAQSHLHGIKPRYTGTYNAYRVIATTESLSTLWKGTTPNLMRNVIINCTELVTYDLMKGALVNHHILADDVPCHLLSALVAGFCTTLLASPVDVVKTRFINSLPGQYPSVPSCAMTMYTKEGPAAFFKGFAPSFLRLGSWNVIMFVCFEQLKKELMKSRQTVDCTT.

Over 1 to 10 the chain is Mitochondrial intermembrane; that stretch reads MVSSTTSEVQ. A helical membrane pass occupies residues 11 to 32; sequence PTMGVKIFSAGVSACLADIITF. 3 Solcar repeats span residues 11 to 102, 111 to 201, and 210 to 295; these read PTMG…VQEY, ASLG…MKGA, and DDVP…LKKE. The Mitochondrial matrix portion of the chain corresponds to 33–73; sequence PLDTAKVRLQIQGEGQASSTIRYKGVLGTITTLAKTEGLPK. Lys56 lines the fatty acid 16:0 pocket. The helical transmembrane segment at 74–96 threads the bilayer; sequence LYSGLPAGIQRQISFASLRIGLY. Residues 97–116 lie on the Mitochondrial intermembrane side of the membrane; sequence DTVQEYFSSGRETPASLGSK. Residues 117–133 traverse the membrane as a helical segment; it reads ISAGLMTGGVAVFIGQP. Residues 134–178 are Mitochondrial matrix-facing; that stretch reads TEVVKVRMQAQSHLHGIKPRYTGTYNAYRVIATTESLSTLWKGTT. The helical transmembrane segment at 179 to 195 threads the bilayer; sequence PNLMRNVIINCTELVTY. Residues 196–212 are Mitochondrial intermembrane-facing; it reads DLMKGALVNHHILADDV. The helical transmembrane segment at 213–232 threads the bilayer; that stretch reads PCHLLSALVAGFCTTLLASP. The Mitochondrial matrix portion of the chain corresponds to 233-266; it reads VDVVKTRFINSLPGQYPSVPSCAMTMYTKEGPAA. A Cysteine sulfenic acid (-SOH) modification is found at Cys254. The helical transmembrane segment at 267 to 289 threads the bilayer; it reads FFKGFAPSFLRLGSWNVIMFVCF. Lys269 is a binding site for fatty acid 16:0. The Mitochondrial intermembrane portion of the chain corresponds to 290–307; the sequence is EQLKKELMKSRQTVDCTT.

The protein belongs to the mitochondrial carrier (TC 2.A.29) family. In terms of assembly, most probably functions as a monomer. Binds one purine nucleotide per monomer. However, has also been suggested to function as a homodimer or a homotetramer. Tightly associates with cardiolipin in the mitochondrion inner membrane; may stabilize and regulate its activity. In terms of processing, may undergo ubiquitin-mediated proteasomal degradation. Post-translationally, may undergo sulfenylation upon cold exposure. May increase the sensitivity of UCP1 thermogenic function to the activation by noradrenaline probably through structural effects. Brown adipose tissue.

It is found in the mitochondrion inner membrane. The enzyme catalyses H(+)(in) = H(+)(out). Its activity is regulated as follows. Has no constitutive proton transporter activity and has to be activated by long-chain fatty acids/LCFAs. Inhibited by purine nucleotides. Both purine nucleotides and LCFAs bind the cytosolic side of the transporter and directly compete to activate or inhibit it. Activated by noradrenaline and reactive oxygen species. Despite lacking canonical translational encoding for selenocysteine, a small pool of the protein has been observed to selectively incorporate selenocysteine at 'Cys-254'. Selenocysteine-modified protein is highly sensitive to redox modification and may constitute a pool of protein highly sensitive to activation by elevated levels of reactive oxygen species (ROS). Functionally, mitochondrial protein responsible for thermogenic respiration, a specialized capacity of brown adipose tissue and beige fat that participates in non-shivering adaptive thermogenesis to temperature and diet variations and more generally to the regulation of energy balance. Functions as a long-chain fatty acid/LCFA and proton symporter, simultaneously transporting one LCFA and one proton through the inner mitochondrial membrane. However, LCFAs remaining associated with the transporter via their hydrophobic tails, it results in an apparent transport of protons activated by LCFAs. Thereby, dissipates the mitochondrial proton gradient and converts the energy of substrate oxydation into heat instead of ATP. Regulates the production of reactive oxygen species/ROS by mitochondria. The polypeptide is Mitochondrial brown fat uncoupling protein 1 (Rattus norvegicus (Rat)).